The following is a 420-amino-acid chain: Glutamyl-tRNA reductase (420 aa).

Substrate contacts are provided by residues Thr49–Arg52, Ser109, Glu114–Gln116, and Gln120. The active-site Nucleophile is Cys50. Gly189–Ile194 is an NADP(+) binding site.

It belongs to the glutamyl-tRNA reductase family. Homodimer.

The enzyme catalyses (S)-4-amino-5-oxopentanoate + tRNA(Glu) + NADP(+) = L-glutamyl-tRNA(Glu) + NADPH + H(+). It participates in porphyrin-containing compound metabolism; protoporphyrin-IX biosynthesis; 5-aminolevulinate from L-glutamyl-tRNA(Glu): step 1/2. Its function is as follows. Catalyzes the NADPH-dependent reduction of glutamyl-tRNA(Glu) to glutamate 1-semialdehyde (GSA). This Edwardsiella ictaluri (strain 93-146) protein is Glutamyl-tRNA reductase.